Consider the following 547-residue polypeptide: Delta-guaiene synthase 1 (547 aa).

Mg(2+)-binding residues include Asp-299, Asp-303, and Asp-444. The DDXXD motif motif lies at 299–303 (DDTYD).

Belongs to the terpene synthase family. It depends on Mg(2+) as a cofactor.

It catalyses the reaction (2E,6E)-farnesyl diphosphate = delta-guaiene + diphosphate. The enzyme catalyses (2E,6E)-farnesyl diphosphate = alpha-guaiene + diphosphate. It participates in secondary metabolite biosynthesis; terpenoid biosynthesis. Its function is as follows. Sesquiterpene synthase involved in the biosynthesis of delta-guaiene (81.2%) and alpha-guaiene (18.1%), two structures composed of five- and seven-membered rings. Also produces 0.7% of alpha-humulene. The polypeptide is Delta-guaiene synthase 1 (C2) (Aquilaria crassna (Eagle wood)).